The primary structure comprises 359 residues: MPLSRLIIQQFRNIKACDIALSPGFNFLIGPNGSGKTSVLEAIYLLGHGRSFKSALTGRVIQNECDQLFVYGRFLNSDQFELPIGINKQRDGTTEVKIGGQSGQKLAQLAQVLPLQLIHPEGFDLLTDGPKHRRAFIDWGVFHTEPAFYDAWGRFKRLNKQRNALLKSAKSYQELSYWDKEMARLAELISQWRADYVAQMQSKAEQLCQEFLPEFHIQLKYYRGWEKETPYQQILEENFERDQTLGYTVSGPNKADLRIKVNNTPVEDVLSRGQLKLMVCALRLAQGQHLTEKTGKQCVYLIDDFASELDSQRRKRLADCLKQTGAQVFVSSITENQISDMRDDSGRLFHVEQGVIEQG.

30–37 (GPNGSGKT) provides a ligand contact to ATP.

This sequence belongs to the RecF family.

The protein localises to the cytoplasm. The RecF protein is involved in DNA metabolism; it is required for DNA replication and normal SOS inducibility. RecF binds preferentially to single-stranded, linear DNA. It also seems to bind ATP. In Vibrio vulnificus (strain CMCP6), this protein is DNA replication and repair protein RecF.